Reading from the N-terminus, the 176-residue chain is Protein tyrosine phosphatase PRL-1 (176 aa).

A Tyrosine-protein phosphatase domain is found at 13–165 (GESDAVVFRF…YKPRHQEGNE (153 aa)). Cys-52 and Cys-107 are joined by a disulfide. Asp-75 functions as the Proton donor in the catalytic mechanism. Catalysis depends on Cys-107, which acts as the Phosphocysteine intermediate. 109-113 (AGLGR) serves as a coordination point for substrate. At Cys-173 the chain carries Cysteine methyl ester. The S-farnesyl cysteine moiety is linked to residue Cys-173. Residues 174 to 176 (AVM) constitute a propeptide, removed in mature form.

It belongs to the protein-tyrosine phosphatase family.

The protein resides in the flagellar pocket. It carries out the reaction O-phospho-L-tyrosyl-[protein] + H2O = L-tyrosyl-[protein] + phosphate. With respect to regulation, activated in a reduced environment which promotes the reduction of the disulfide bond between the regulatory Cys-52 and the catalytic Cys-107 residues. Inhibited by sodium orthovanadate. Functionally, has protein tyrosine phosphatase activity. The protein is Protein tyrosine phosphatase PRL-1 of Trypanosoma cruzi (strain CL Brener).